Consider the following 167-residue polypeptide: Photosystem II extrinsic protein V (167 aa).

The N-terminal stretch at 1-30 is a signal peptide; sequence MVFKTLRRTLWLTLAALLAVFQFNLGAAQA. C67, C70, H71, and H122 together coordinate heme c.

The protein belongs to the cytochrome c family. PsbV subfamily. As to quaternary structure, PSII is composed of 1 copy each of membrane proteins PsbA, PsbB, PsbC, PsbD, PsbE, PsbF, PsbH, PsbI, PsbJ, PsbK, PsbL, PsbM, PsbT, PsbX, PsbY, PsbZ, Psb30/Ycf12, peripheral proteins PsbO, CyanoQ (PsbQ), PsbU, PsbV and a large number of cofactors. It forms dimeric complexes. It depends on heme c as a cofactor.

Its subcellular location is the cellular thylakoid membrane. One of the extrinsic, lumenal subunits of photosystem II (PSII). PSII is a light-driven water plastoquinone oxidoreductase, using light energy to abstract electrons from H(2)O, generating a proton gradient subsequently used for ATP formation. The extrinsic proteins stabilize the structure of photosystem II oxygen-evolving complex (OEC), the ion environment of oxygen evolution and protect the OEC against heat-induced inactivation. Low-potential cytochrome c that plays a role in the OEC of PSII. This chain is Photosystem II extrinsic protein V, found in Synechococcus elongatus (strain ATCC 33912 / PCC 7942 / FACHB-805) (Anacystis nidulans R2).